The chain runs to 149 residues: Large ribosomal subunit protein bL9 (149 aa).

This sequence belongs to the bacterial ribosomal protein bL9 family.

Functionally, binds to the 23S rRNA. The polypeptide is Large ribosomal subunit protein bL9 (Enterobacter sp. (strain 638)).